The chain runs to 311 residues: 4-hydroxy-3-methylbut-2-enyl diphosphate reductase (311 aa).

Cysteine 12 lines the [4Fe-4S] cluster pocket. 2 residues coordinate (2E)-4-hydroxy-3-methylbut-2-enyl diphosphate: histidine 41 and histidine 74. Dimethylallyl diphosphate-binding residues include histidine 41 and histidine 74. Positions 41 and 74 each coordinate isopentenyl diphosphate. Cysteine 96 is a [4Fe-4S] cluster binding site. Residue histidine 124 coordinates (2E)-4-hydroxy-3-methylbut-2-enyl diphosphate. Residue histidine 124 coordinates dimethylallyl diphosphate. Histidine 124 is an isopentenyl diphosphate binding site. Glutamate 126 functions as the Proton donor in the catalytic mechanism. Threonine 168 provides a ligand contact to (2E)-4-hydroxy-3-methylbut-2-enyl diphosphate. Residue cysteine 198 coordinates [4Fe-4S] cluster. (2E)-4-hydroxy-3-methylbut-2-enyl diphosphate contacts are provided by serine 226, serine 227, asparagine 228, and serine 270. 4 residues coordinate dimethylallyl diphosphate: serine 226, serine 227, asparagine 228, and serine 270. Isopentenyl diphosphate-binding residues include serine 226, serine 227, asparagine 228, and serine 270.

Belongs to the IspH family. [4Fe-4S] cluster is required as a cofactor.

It carries out the reaction isopentenyl diphosphate + 2 oxidized [2Fe-2S]-[ferredoxin] + H2O = (2E)-4-hydroxy-3-methylbut-2-enyl diphosphate + 2 reduced [2Fe-2S]-[ferredoxin] + 2 H(+). It catalyses the reaction dimethylallyl diphosphate + 2 oxidized [2Fe-2S]-[ferredoxin] + H2O = (2E)-4-hydroxy-3-methylbut-2-enyl diphosphate + 2 reduced [2Fe-2S]-[ferredoxin] + 2 H(+). It participates in isoprenoid biosynthesis; dimethylallyl diphosphate biosynthesis; dimethylallyl diphosphate from (2E)-4-hydroxy-3-methylbutenyl diphosphate: step 1/1. It functions in the pathway isoprenoid biosynthesis; isopentenyl diphosphate biosynthesis via DXP pathway; isopentenyl diphosphate from 1-deoxy-D-xylulose 5-phosphate: step 6/6. Its function is as follows. Catalyzes the conversion of 1-hydroxy-2-methyl-2-(E)-butenyl 4-diphosphate (HMBPP) into a mixture of isopentenyl diphosphate (IPP) and dimethylallyl diphosphate (DMAPP). Acts in the terminal step of the DOXP/MEP pathway for isoprenoid precursor biosynthesis. This chain is 4-hydroxy-3-methylbut-2-enyl diphosphate reductase, found in Alcanivorax borkumensis (strain ATCC 700651 / DSM 11573 / NCIMB 13689 / SK2).